We begin with the raw amino-acid sequence, 310 residues long: p-hydroxybenzoic acid efflux pump subunit AaeA (310 aa).

Residues 12–32 (AITLVLVILAFIAIFRAWVYY) traverse the membrane as a helical segment.

This sequence belongs to the membrane fusion protein (MFP) (TC 8.A.1) family.

The protein resides in the cell inner membrane. Its function is as follows. Forms an efflux pump with AaeB. This chain is p-hydroxybenzoic acid efflux pump subunit AaeA, found in Escherichia fergusonii (strain ATCC 35469 / DSM 13698 / CCUG 18766 / IAM 14443 / JCM 21226 / LMG 7866 / NBRC 102419 / NCTC 12128 / CDC 0568-73).